We begin with the raw amino-acid sequence, 359 residues long: Transcription factor MafA (359 aa).

The residue at position 14 (Ser-14) is a Phosphoserine. A Glycyl lysine isopeptide (Lys-Gly) (interchain with G-Cter in SUMO2) cross-link involves residue Lys-32. Disordered stretches follow at residues 40-105 (RFCH…VGGA) and 172-226 (GGGA…AGHH). Over residues 46–73 (PPGSLSSTPLSTPCSSVPSSPSFCAPSP) the composition is skewed to low complexity. At Ser-49 the chain carries Phosphoserine. Phosphothreonine occurs at positions 53 and 57. Phosphoserine occurs at positions 61 and 65. Gly residues predominate over residues 74-84 (GTGGGAGGGGS). Residues 181–209 (GHHHGAHHTAHHHHSAHHHHHHHHHHGGS) are compositionally biased toward basic residues. Over residues 210–224 (GHHGGGAGHGGGGAG) the composition is skewed to gly residues. The tract at residues 260 to 285 (RLKQKRRTLKNRGYAQSCRFKRVQQR) is basic motif. The bZIP domain maps to 260 to 323 (RLKQKRRTLK…DLYKEKYEKL (64 aa)). A leucine-zipper region spans residues 288–309 (LESEKCQLQSQVEQLKLEVGRL). The segment at 322-359 (KLAGRGGPGGAGGAGFPREPSPAQAGPGAAKGAPDFFL) is disordered. A compositionally biased stretch (gly residues) spans 325–336 (GRGGPGGAGGAG). Low complexity predominate over residues 343–359 (PAQAGPGAAKGAPDFFL).

This sequence belongs to the bZIP family. Maf subfamily. In terms of assembly, forms homodimers. Interacts with NEUROD1 and PDX1. May interact with MAFB, FOS, JUN and PCAF. In terms of processing, ubiquitinated, leading to its degradation by the proteasome. Post-translationally, phosphorylated at tyrosines. As to expression, expressed in brain, lung, spleen, pancreas and kidney. In the pancreas, expressed in the insulin-producing beta-cells of the islets of Langerhans (at protein level). Also expressed in the eye.

The protein localises to the nucleus. In terms of biological role, transcriptional factor that activates insulin gene expression. Acts synergistically with NEUROD1/BETA2 and PDX1. Binds the insulin enhancer C1/RIPE3b element. Binds to consensus TRE-type MARE 5'-TGCTGACTCAGCA-3' DNA sequence. The protein is Transcription factor MafA (Mafa) of Mus musculus (Mouse).